A 545-amino-acid chain; its full sequence is CTP synthase (545 aa).

The tract at residues methionine 1–leucine 266 is amidoligase domain. Serine 14 lines the CTP pocket. Serine 14 provides a ligand contact to UTP. ATP-binding positions include serine 15–isoleucine 20 and aspartate 72. Mg(2+) contacts are provided by aspartate 72 and glutamate 140. CTP contacts are provided by residues aspartate 147–glutamate 149, lysine 187–glutamine 192, and lysine 223. Residues lysine 187–glutamine 192 and lysine 223 each bind UTP. Residue lysine 239 to valine 241 coordinates ATP. The region spanning threonine 291–glycine 542 is the Glutamine amidotransferase type-1 domain. Glycine 352 is a binding site for L-glutamine. Cysteine 379 functions as the Nucleophile; for glutamine hydrolysis in the catalytic mechanism. Residues leucine 380–glutamine 383, glutamate 403, and arginine 470 contribute to the L-glutamine site. Residues histidine 515 and glutamate 517 contribute to the active site.

Belongs to the CTP synthase family. In terms of assembly, homotetramer.

The enzyme catalyses UTP + L-glutamine + ATP + H2O = CTP + L-glutamate + ADP + phosphate + 2 H(+). It carries out the reaction L-glutamine + H2O = L-glutamate + NH4(+). It catalyses the reaction UTP + NH4(+) + ATP = CTP + ADP + phosphate + 2 H(+). It participates in pyrimidine metabolism; CTP biosynthesis via de novo pathway; CTP from UDP: step 2/2. With respect to regulation, allosterically activated by GTP, when glutamine is the substrate; GTP has no effect on the reaction when ammonia is the substrate. The allosteric effector GTP functions by stabilizing the protein conformation that binds the tetrahedral intermediate(s) formed during glutamine hydrolysis. Inhibited by the product CTP, via allosteric rather than competitive inhibition. Its function is as follows. Catalyzes the ATP-dependent amination of UTP to CTP with either L-glutamine or ammonia as the source of nitrogen. Regulates intracellular CTP levels through interactions with the four ribonucleotide triphosphates. This is CTP synthase from Photorhabdus laumondii subsp. laumondii (strain DSM 15139 / CIP 105565 / TT01) (Photorhabdus luminescens subsp. laumondii).